The following is a 200-amino-acid chain: High mobility group protein 1 homolog (200 aa).

DNA-binding regions (HMG box) lie at residues 11-81 and 100-168; these read PRGR…QSYK and PKRN…AEYK. A compositionally biased stretch (basic and acidic residues) spans 64-86; it reads EKSMRDKVRYDREMQSYKPPKGE. 2 disordered regions span residues 64–103 and 169–200; these read EKSM…PKRN and AKAK…DDSD. Acidic residues predominate over residues 190-200; the sequence is SSDDSSSDDSD.

This sequence belongs to the HMGB family.

The protein resides in the nucleus. Its subcellular location is the chromosome. In terms of biological role, binds preferentially single-stranded DNA and unwinds double-stranded DNA. The polypeptide is High mobility group protein 1 homolog (HMG1) (Strongylocentrotus purpuratus (Purple sea urchin)).